The chain runs to 365 residues: Spermidine-binding periplasmic protein SpuE (365 aa).

The first 24 residues, 1-24 (MQHSIGKTLLVAALATAIAGPVQA), serve as a signal peptide directing secretion. Residues T35, E181, D242, and N269 each coordinate spermidine.

It belongs to the bacterial solute-binding protein PotD/PotF family.

Its subcellular location is the periplasm. Its function is as follows. Spermidine-binding protein probably required for its uptake into cells. Binds spermidine with high affinity (KD=14.3 nM). Does not bind putrescine, cadaverine or spermine. Spermidine binding induces large inter-domain conformational changes. Implicated in induction of type 3 secretion systems (T3SS), which play a role in virulence. In Pseudomonas aeruginosa (strain ATCC 15692 / DSM 22644 / CIP 104116 / JCM 14847 / LMG 12228 / 1C / PRS 101 / PAO1), this protein is Spermidine-binding periplasmic protein SpuE (spuE).